A 507-amino-acid chain; its full sequence is Cytochrome P450 4A14 (507 aa).

Residues 1–4 constitute a propeptide, removed in mature form; the sequence is MGFS. Glutamate 318 serves as a coordination point for heme. Position 437 is a phosphoserine (serine 437). Cysteine 454 contacts heme.

The protein belongs to the cytochrome P450 family. Requires heme as cofactor.

The protein resides in the endoplasmic reticulum membrane. Its subcellular location is the microsome membrane. It catalyses the reaction an omega-methyl-long-chain fatty acid + reduced [NADPH--hemoprotein reductase] + O2 = an omega-hydroxy-long-chain fatty acid + oxidized [NADPH--hemoprotein reductase] + H2O + H(+). The catalysed reaction is dodecanoate + reduced [NADPH--hemoprotein reductase] + O2 = (11R)-hydroxydodecanoate + oxidized [NADPH--hemoprotein reductase] + H2O + H(+). It carries out the reaction dodecanoate + reduced [NADPH--hemoprotein reductase] + O2 = 12-hydroxydodecanoate + oxidized [NADPH--hemoprotein reductase] + H2O + H(+). The enzyme catalyses tetradecanoate + reduced [NADPH--hemoprotein reductase] + O2 = 14-hydroxytetradecanoate + oxidized [NADPH--hemoprotein reductase] + H2O + H(+). It functions in the pathway lipid metabolism; fatty acid metabolism. A cytochrome P450 monooxygenase that catalyzes omega and omega-1 hydroxylation of saturated fatty acids. Exhibits preferential omega versus omega-1 regioselectivity and (R) versus (S) stereoselectivity for hydroxylation of dodecanoic (lauric) acid. Mechanistically, uses molecular oxygen inserting one oxygen atom into a substrate, and reducing the second into a water molecule, with two electrons provided by NADPH via cytochrome P450 reductase (CPR; NADPH-ferrihemoprotein reductase). In Rattus norvegicus (Rat), this protein is Cytochrome P450 4A14.